The chain runs to 447 residues: Transducin beta-like protein 2 (447 aa).

Residues 38–72 form a disordered region; that stretch reads RSGRPACQKANGFPPDKSSGSKKQKQYQRIRKEKP. Positions 57 to 69 are enriched in basic residues; it reads GSKKQKQYQRIRK. WD repeat units lie at residues 88-127, 134-174, 186-226, 228-267, 277-316, 329-367, and 371-409; these read SHSGNISCMDFSSNGKYLATCADDRTIRIWSTKDFLQREH, VELD…DGGY, KHKA…STIN, NQMNNTHAAVSPCGRFVASCGFTPDVKVWEVCFGKKGEFQ, GHSAAVHSFAFSNDSRRMASVSKDGTWKLWDTDVEYKKKQ, AAGAAPCRLALSPNAQVLALASGSSIHLYNTRRGEKEEC, and VHGECIANLSFDITGRFLASCGDRAVRLFHNTPGHRAMV. K168 participates in a covalent cross-link: Glycyl lysine isopeptide (Lys-Gly) (interchain with G-Cter in SUMO2). T433 is modified (phosphothreonine; by ATM or ATR).

This is Transducin beta-like protein 2 (TBL2) from Homo sapiens (Human).